We begin with the raw amino-acid sequence, 1150 residues long: Apomucin (1150 aa).

Low complexity-rich tracts occupy residues 1–36 (ETARPSVAGSGTTGTVSGASGSTGSSSGSTGATGAS) and 46–79 (SVAGSSGAPAVSSGASQAAGTSGAGPGTTASSVG). Repeat copies occupy residues 1 to 44 (ETAR…ETSR), 45 to 125 (ISVA…ETSR), 126 to 206 (ISVA…ETSR), 207 to 287 (ISVA…ETSR), and 288 to 368 (ISVA…ETSR). The 6 X 81 AA tandem repeats stretch occupies residues 1–368 (ETARPSVAGS…ASIGQPETSR (368 aa)). 2 disordered regions span residues 1–730 (ETAR…KTGI) and 776–925 (APGS…PAPL). Ser46, Ser50, Ser51, Ser57, Ser58, and Ser61 each carry an O-linked (GalNAc...) serine; partial glycan. A glycan (O-linked (GalNAc...) threonine; partial) is linked at Thr66. A glycan (O-linked (GalNAc...) serine; partial) is linked at Ser67. Residues Thr73 and Thr74 are each glycosylated (O-linked (GalNAc...) threonine; partial). O-linked (GalNAc...) serine; partial glycosylation is found at Ser76 and Ser77. Thr81 and Thr83 each carry an O-linked (GalNAc...) threonine; partial glycan. Over residues 86–117 (PSVAGSGTTGTVSGASGSTGSSSGSPGATGAS) the composition is skewed to low complexity. Residues Ser87 and Ser91 are each glycosylated (O-linked (GalNAc...) serine; partial). O-linked (GalNAc...) threonine; partial glycosylation is found at Thr93, Thr94, and Thr96. Residues Ser98, Ser101, and Ser103 are each glycosylated (O-linked (GalNAc...) serine; partial). Thr104 is a glycosylation site (O-linked (GalNAc...) threonine; partial). O-linked (GalNAc...) serine; partial glycans are attached at residues Ser106, Ser107, Ser108, and Ser110. An O-linked (GalNAc...) threonine; partial glycan is attached at Thr114. O-linked (GalNAc...) serine; partial glycosylation is present at Ser117. A glycan (O-linked (GalNAc...) threonine; partial) is linked at Thr123. The O-linked (GalNAc...) serine; partial glycan is linked to Ser124. Composition is skewed to low complexity over residues 127-160 (SVAGSSGAPAVSSGASQAAGTSGAGPGTTASSVG), 167-198 (PSVAGSGTTGTVSGASGSTGSSSGSPGATGAS), 208-241 (SVAGSSGAPAVSSGASQAAGTSGAGPGTTASSVG), 248-279 (PSVAGSGTTGTVSGASGSTGSSSGSPGATGAS), 289-322 (SVAGSSGAPAVSSGASQAAGTSGAGPGTTASSVG), 329-360 (PSVAGSGTTGTVSGASGSTGSSSGSPGATGAS), and 370-396 (SVAGSSGAPAVSSGASQAAGTSEATTS). One copy of the 6; truncated repeat lies at 369-391 (ISVAGSSGAPAVSSGASQAAGTS). N-linked (GlcNAc...) asparagine glycosylation is present at Asn418. Over residues 442-459 (SYNTEATTSIGRSGTTHT) the composition is skewed to polar residues. Low complexity predominate over residues 473-506 (SHSSQSSKPGSSVTTPGSPESGSETGTSGEFSTT). Polar residues-rich tracts occupy residues 507–517 (VISGSSHTEAT) and 537–547 (ELSGTTIASGN). Residue Asn547 is glycosylated (N-linked (GlcNAc...) asparagine). Residues 548-558 (ATTEATTSTET) show a composition bias toward low complexity. Residues 564-586 (TGAQTTVPGSQVSGSETGTSEAV) are compositionally biased toward polar residues. A compositionally biased stretch (low complexity) spans 590–625 (AIASGSSSTGTTSGASDSQVTGSRTGTTGVVLGTTV). Composition is skewed to polar residues over residues 626–635 (APGSSSTGAT) and 643–661 (GTRSTSLGTTRVASGTTYE). Gly residues predominate over residues 671-682 (GGSGTPGSGINT). Polar residues-rich tracts occupy residues 688–697 (QVTGIQTGTT), 706–729 (LPGSSNTGATTSPSERTSPGSKTG), and 779–788 (SFNTKATTPT). A compositionally biased stretch (low complexity) spans 790–833 (VRAATGAGTAVGATSRSTGISTGPENSTPGTTETGSGTTSSPGG). The span at 875–908 (ETTTAPRISATGSTSVSKEITASPKVSSPETTAG) shows a compositional bias: polar residues. 4 N-linked (GlcNAc...) asparagine glycosylation sites follow: Asn917, Asn985, Asn1002, and Asn1068. The VWFC domain occupies 929-995 (PVCHGPLGEE…DTCCEIGHCE (67 aa)). Intrachain disulfides connect Cys1062–Cys1109, Cys1076–Cys1123, Cys1085–Cys1139, and Cys1089–Cys1141. The 85-residue stretch at 1062–1146 (CKPSPVNVTV…TACSCLDPCQ (85 aa)) folds into the CTCK domain.

In terms of assembly, intermolecular disulfide bonds could help maintain a multimeric mucin structure. Post-translationally, extensively O-glycosylated on most but not all Ser and Thr residues of the repeat units. Highest glycosylation appears to occur on Ser residues which have Gly at positions at +2 or -2 from the glycosylation site or, where Gly is the penultimate residue. The presence of proline (usually at position +3 or -3) appears to also enhance glycosylation. As to expression, submaxillary mucosae.

The protein resides in the secreted. Apomucin is part of mucin, the major glycoprotein synthesized and secreted by mucous cells of the submaxillary gland. Its highly viscous aqueous solutions serve to lubricate the oral cavity and to protect it from the external environment. This is Apomucin from Sus scrofa (Pig).